A 237-amino-acid chain; its full sequence is Phosphoribosylaminoimidazole-succinocarboxamide synthase (237 aa).

Belongs to the SAICAR synthetase family.

It carries out the reaction 5-amino-1-(5-phospho-D-ribosyl)imidazole-4-carboxylate + L-aspartate + ATP = (2S)-2-[5-amino-1-(5-phospho-beta-D-ribosyl)imidazole-4-carboxamido]succinate + ADP + phosphate + 2 H(+). The protein operates within purine metabolism; IMP biosynthesis via de novo pathway; 5-amino-1-(5-phospho-D-ribosyl)imidazole-4-carboxamide from 5-amino-1-(5-phospho-D-ribosyl)imidazole-4-carboxylate: step 1/2. The chain is Phosphoribosylaminoimidazole-succinocarboxamide synthase from Psychrobacter arcticus (strain DSM 17307 / VKM B-2377 / 273-4).